Here is a 338-residue protein sequence, read N- to C-terminus: tRNA N6-adenosine threonylcarbamoyltransferase (338 aa).

H109 and H113 together coordinate Fe cation. Substrate contacts are provided by residues 132 to 136 (AISGA), D165, G178, and N277. D302 is a Fe cation binding site.

Belongs to the KAE1 / TsaD family. Fe(2+) serves as cofactor.

The protein resides in the cytoplasm. It carries out the reaction L-threonylcarbamoyladenylate + adenosine(37) in tRNA = N(6)-L-threonylcarbamoyladenosine(37) in tRNA + AMP + H(+). Required for the formation of a threonylcarbamoyl group on adenosine at position 37 (t(6)A37) in tRNAs that read codons beginning with adenine. Is involved in the transfer of the threonylcarbamoyl moiety of threonylcarbamoyl-AMP (TC-AMP) to the N6 group of A37, together with TsaE and TsaB. TsaD likely plays a direct catalytic role in this reaction. This is tRNA N6-adenosine threonylcarbamoyltransferase from Chlamydia trachomatis serovar A (strain ATCC VR-571B / DSM 19440 / HAR-13).